Here is a 269-residue protein sequence, read N- to C-terminus: Phosphatidylglycerol--prolipoprotein diacylglyceryl transferase (269 aa).

Transmembrane regions (helical) follow at residues Ile-10–Phe-30, Ala-56–Tyr-76, Ile-91–Phe-111, Phe-126–Gly-146, Pro-172–Phe-192, Tyr-200–Val-220, and Glu-237–Leu-257. Arg-139 is a binding site for a 1,2-diacyl-sn-glycero-3-phospho-(1'-sn-glycerol).

It belongs to the Lgt family.

The protein localises to the cell inner membrane. The catalysed reaction is L-cysteinyl-[prolipoprotein] + a 1,2-diacyl-sn-glycero-3-phospho-(1'-sn-glycerol) = an S-1,2-diacyl-sn-glyceryl-L-cysteinyl-[prolipoprotein] + sn-glycerol 1-phosphate + H(+). It functions in the pathway protein modification; lipoprotein biosynthesis (diacylglyceryl transfer). In terms of biological role, catalyzes the transfer of the diacylglyceryl group from phosphatidylglycerol to the sulfhydryl group of the N-terminal cysteine of a prolipoprotein, the first step in the formation of mature lipoproteins. The chain is Phosphatidylglycerol--prolipoprotein diacylglyceryl transferase from Marinomonas sp. (strain MWYL1).